The sequence spans 530 residues: Ubiquitin carboxyl-terminal hydrolase 17-like protein 19 (530 aa).

The USP domain occupies 80–375; that stretch reads AGLQNMGNTC…QAYVLFYIQK (296 aa). The active-site Nucleophile is Cys-89. The active-site Proton acceptor is the His-334. Composition is skewed to basic and acidic residues over residues 382–392 and 398–413; these read SESVSRGREPR and DTDR…RDHP. Disordered stretches follow at residues 382–413 and 476–530; these read SESV…RDHP and KNHH…LVCQ. The segment covering 484–495 has biased composition (low complexity); sequence SSLLKLSSTTPT. Polar residues predominate over residues 496–505; that stretch reads HQESMNTGTL. Residues 510–524 are compositionally biased toward basic residues; it reads GRARRSKGKNKHSKR.

Belongs to the peptidase C19 family. USP17 subfamily.

It localises to the nucleus. It is found in the endoplasmic reticulum. It catalyses the reaction Thiol-dependent hydrolysis of ester, thioester, amide, peptide and isopeptide bonds formed by the C-terminal Gly of ubiquitin (a 76-residue protein attached to proteins as an intracellular targeting signal).. Its function is as follows. Deubiquitinating enzyme that removes conjugated ubiquitin from specific proteins to regulate different cellular processes that may include cell proliferation, progression through the cell cycle, apoptosis, cell migration, and the cellular response to viral infection. This Homo sapiens (Human) protein is Ubiquitin carboxyl-terminal hydrolase 17-like protein 19 (USP17L19).